Consider the following 270-residue polypeptide: Elongation factor Ts (270 aa).

An involved in Mg(2+) ion dislocation from EF-Tu region spans residues 75-78 (TDFV).

The protein belongs to the EF-Ts family.

Its subcellular location is the cytoplasm. In terms of biological role, associates with the EF-Tu.GDP complex and induces the exchange of GDP to GTP. It remains bound to the aminoacyl-tRNA.EF-Tu.GTP complex up to the GTP hydrolysis stage on the ribosome. In Cutibacterium acnes (strain DSM 16379 / KPA171202) (Propionibacterium acnes), this protein is Elongation factor Ts.